The following is a 502-amino-acid chain: Hippocampus abundant transcript-like protein 1 (502 aa).

The span at methionine 1–serine 12 shows a compositional bias: basic and acidic residues. The segment at methionine 1 to arginine 27 is disordered. Topologically, residues methionine 1–alanine 46 are extracellular. A helical transmembrane segment spans residues isoleucine 47–leucine 67. Residues histidine 68 to asparagine 79 lie on the Cytoplasmic side of the membrane. The chain crosses the membrane as a helical span at residues glycine 80–leucine 100. Over serine 101–proline 108 the chain is Extracellular. Residues phenylalanine 109–tryptophan 129 form a helical membrane-spanning segment. Over tryptophan 130–tyrosine 131 the chain is Cytoplasmic. The helical transmembrane segment at phenylalanine 132 to valine 152 threads the bilayer. Residues alanine 153–tyrosine 165 are Extracellular-facing. A helical transmembrane segment spans residues glycine 166–leucine 186. The Cytoplasmic portion of the chain corresponds to serine 187–serine 193. Residues leucine 194 to valine 214 form a helical membrane-spanning segment. Topologically, residues proline 215 to aspartate 248 are extracellular. Residues serine 249–tyrosine 269 traverse the membrane as a helical segment. Residues serine 270–glutamine 278 are Cytoplasmic-facing. A helical transmembrane segment spans residues valine 279–isoleucine 299. The Extracellular segment spans residues valine 300–lysine 316. The chain crosses the membrane as a helical span at residues asparagine 317 to serine 337. Position 338 (glutamine 338) is a topological domain, cytoplasmic. The helical transmembrane segment at alanine 339–valine 359 threads the bilayer. Residues serine 360–glycine 384 are Extracellular-facing. The chain crosses the membrane as a helical span at residues leucine 385–leucine 405. Topologically, residues threonine 406 to proline 425 are cytoplasmic. Residues glycine 426–isoleucine 446 traverse the membrane as a helical segment. At proline 447–leucine 502 the chain is on the extracellular side.

Belongs to the major facilitator superfamily.

The protein localises to the membrane. In Bos taurus (Bovine), this protein is Hippocampus abundant transcript-like protein 1.